A 232-amino-acid polypeptide reads, in one-letter code: Movement and silencing protein TGBp1 (232 aa).

Positions 1 to 117 (MDVLINKLAS…GPGIVADFVC (117 aa)) constitute a (+)RNA virus helicase ATP-binding domain. Residues 118–232 (NKTKRFGSST…ACPDATFAPS (115 aa)) enclose the (+)RNA virus helicase C-terminal domain.

Belongs to the Tymovirales TGBp1 protein family. Homodimer and homooligomer. Interacts with capsid protein. Interacts with host AGO1; this interaction targets the host protein for degradation, thereby suppressing the antiviral RNA silencing.

Its subcellular location is the host cytoplasm. Functionally, transports viral genome to neighboring plant cells directly through plasmosdesmata, without any budding. The movement protein allows efficient cell to cell propagation, by bypassing the host cell wall barrier. Increases plasmodesma size exclusion limit. Acts as a suppressor of RNA-mediated gene silencing, also known as post-transcriptional gene silencing (PTGS), a mechanism of plant viral defense that limits the accumulation of viral RNAs. The chain is Movement and silencing protein TGBp1 from Populus balsamifera (Balsam poplar).